The following is a 347-amino-acid chain: D-alanine--D-alanine ligase (347 aa).

The 203-residue stretch at 131 to 333 (KRVLESAGIA…YPELIERLVD (203 aa)) folds into the ATP-grasp domain. 161–216 (EEKLAYPVFTKPSNMGSSVGISKSENQEELRQALKLAFRYDSRVLVEQGVNAREIE) provides a ligand contact to ATP. 3 residues coordinate Mg(2+): Asp-287, Glu-300, and Asn-302.

This sequence belongs to the D-alanine--D-alanine ligase family. Mg(2+) is required as a cofactor. Mn(2+) serves as cofactor.

Its subcellular location is the cytoplasm. The enzyme catalyses 2 D-alanine + ATP = D-alanyl-D-alanine + ADP + phosphate + H(+). It participates in cell wall biogenesis; peptidoglycan biosynthesis. Its function is as follows. Cell wall formation. The polypeptide is D-alanine--D-alanine ligase (Streptococcus pneumoniae (strain JJA)).